We begin with the raw amino-acid sequence, 154 residues long: Aspartate carbamoyltransferase regulatory chain (154 aa).

Zn(2+) contacts are provided by Cys-109, Cys-114, Cys-138, and Cys-141.

Belongs to the PyrI family. As to quaternary structure, contains catalytic and regulatory chains. Requires Zn(2+) as cofactor.

Functionally, involved in allosteric regulation of aspartate carbamoyltransferase. This Aliivibrio fischeri (strain ATCC 700601 / ES114) (Vibrio fischeri) protein is Aspartate carbamoyltransferase regulatory chain.